The primary structure comprises 453 residues: MSFIPNTEAEALSALFSRRSVLGATAAGGLLATPLAAFAQSGAASGPGEAEITVDQARQEPIPIVVPNFGAGLGEQISGVITSDLNGTGLFKVMSGSVPPGSTPDFSALKAQGARAAVAGQAVGAGSVRVEMRLWDVLSGQQLQGTAYTASNSNWRRIAHIIADVIYERMLGEKGYFDTRIAYIARTGPRHHQITRLALMDQDGANERMLTGGEWLTLTPRFNPVRDQIAFMSYANNRPRVYLFDLASGRQQILGEFAGISFAPRFSPTGGSVVLSATRGGGSDIFVVDLASRAKRQITNSNGAIDTSPCFSPDGSQIVFNSDRGGSPQLYIMSASGGAAKRISYGSGQYGSPVWSPRGDLIAFTRIGSGGFSLGVMNPDGTGERILTQGFTVDGATFCPNGRVLAFCRQSASGAGGAGFASGIGTIDITGFNERPIRISTGASDPAWSPRNG.

Positions 1 to 39 are cleaved as a signal peptide; the sequence is MSFIPNTEAEALSALFSRRSVLGATAAGGLLATPLAAFA.

This sequence belongs to the TolB family. The Tol-Pal system is composed of five core proteins: the inner membrane proteins TolA, TolQ and TolR, the periplasmic protein TolB and the outer membrane protein Pal. They form a network linking the inner and outer membranes and the peptidoglycan layer.

Its subcellular location is the periplasm. Part of the Tol-Pal system, which plays a role in outer membrane invagination during cell division and is important for maintaining outer membrane integrity. This is Tol-Pal system protein TolB from Gluconobacter oxydans (strain 621H) (Gluconobacter suboxydans).